The following is a 321-amino-acid chain: Glucokinase (321 aa).

ATP is bound at residue 8-13; sequence GDVGGT.

The protein belongs to the bacterial glucokinase family.

The protein resides in the cytoplasm. The enzyme catalyses D-glucose + ATP = D-glucose 6-phosphate + ADP + H(+). The polypeptide is Glucokinase (Shigella boydii serotype 18 (strain CDC 3083-94 / BS512)).